The sequence spans 557 residues: 6-methylpretetramide 4-monooxygenase (557 aa).

Residues 9-38 and 278-288 contribute to the FAD site; these read QVLI…VIDR and MRSGRCFVAGD. The tract at residues 530–557 is disordered; sequence LPEDTAPGAGDSAGRPAPDGTRRGVTTE.

Belongs to the PheA/TfdB FAD monooxygenase family. It depends on FAD as a cofactor.

It carries out the reaction 6-methylpretetramide + NADPH + O2 + 2 H(+) = 4-hydroxy-6-methylpretetramide + NADP(+) + H2O. It catalyses the reaction 4-hydroxy-6-methylpretetramide + NADPH + O2 = 4-dedimethylamino-4-oxo-anhydrotetracycline + NADP(+) + H2O. The protein operates within antibiotic biosynthesis; oxytetracycline biosynthesis. Involved in the biosynthesis of the tetracycline antibiotic, oxytetracycline. Catalyzes the double hydroxylation of 6-methylpretetramide to yield 4-keto-anhydrotetracycline, via the insertion of oxygen atoms at the C-12a and C-4 positions of 6-pretetramid. The protein is 6-methylpretetramide 4-monooxygenase of Streptomyces rimosus.